The sequence spans 79 residues: Acyl carrier protein (79 aa).

In terms of domain architecture, Carrier spans 2–77; it reads ESIEQRVKKI…QAIDYINSHG (76 aa). Position 37 is an O-(pantetheine 4'-phosphoryl)serine (serine 37).

It belongs to the acyl carrier protein (ACP) family. In terms of processing, 4'-phosphopantetheine is transferred from CoA to a specific serine of apo-ACP by AcpS. This modification is essential for activity because fatty acids are bound in thioester linkage to the sulfhydryl of the prosthetic group.

The protein localises to the cytoplasm. Its pathway is lipid metabolism; fatty acid biosynthesis. Its function is as follows. Carrier of the growing fatty acid chain in fatty acid biosynthesis. In Bordetella avium (strain 197N), this protein is Acyl carrier protein.